Here is a 323-residue protein sequence, read N- to C-terminus: Olfactory receptor 51S1 (323 aa).

At 1–33 (MSTLPTQIAPNSSTSMAPTFLLVGMPGLSGAPS) the chain is on the extracellular side. Asn11 carries an N-linked (GlcNAc...) asparagine glycan. The chain crosses the membrane as a helical span at residues 34–54 (WWTLPLIAVYLLSALGNGTIL). The Cytoplasmic portion of the chain corresponds to 55–62 (WIIALQPA). The helical transmembrane segment at 63-83 (LHRPMHFFLFLLSVSDIGLVT) threads the bilayer. Residues 84–107 (ALMPTLLGIALAGAHTVPASACLL) lie on the Extracellular side of the membrane. Residues Cys105 and Cys197 are joined by a disulfide bond. The chain crosses the membrane as a helical span at residues 108-128 (QMVFIHVFSVMESSVLLAMSI). The Cytoplasmic portion of the chain corresponds to 129–147 (DRALAICRPLHYPALLTNG). A helical transmembrane segment spans residues 148–168 (VISKISLAISFRCLGLHLPLP). Topologically, residues 169-203 (FLLAYMPYCLPQVLTHSYCLHPDVARLACPEAWGA) are extracellular. Residues 204–224 (AYSLFVVLSAMGLDPLLIFFS) traverse the membrane as a helical segment. Over 225-244 (YGLIGKVLQGVESREDRWKA) the chain is Cytoplasmic. A helical membrane pass occupies residues 245 to 265 (GQTCAAHLSAVLLFYIPMILL). The Extracellular segment spans residues 266 to 280 (ALINHPELPITQHTH). The helical transmembrane segment at 281–301 (TLLSYVHFLLPPLINPILYSV) threads the bilayer. Over 302–323 (KMKEIRKRILNRLQPRKVGGAQ) the chain is Cytoplasmic.

The protein belongs to the G-protein coupled receptor 1 family.

The protein localises to the cell membrane. In terms of biological role, odorant receptor. This is Olfactory receptor 51S1 (OR51S1) from Homo sapiens (Human).